A 621-amino-acid chain; its full sequence is F-box/LRR-repeat protein 4 (621 aa).

The residue at position 28 (Arg28) is an Asymmetric dimethylarginine. Residues 277-332 enclose the F-box domain; the sequence is NGYFDKLPYELIQLILNHLTLPDLCRLAQTCKLLNQHCCDPLQYIHLNLQPYWAKL. LRR repeat units follow at residues 376-397, 402-421, 427-448, 452-474, 480-501, 504-524, 532-558, 559-583, and 584-609; these read ELVRLELSCSHFLNETCLEIIS, NLQDLNLSSCDKLPPQAFSH, GLKRLVLYRTKVEQTALLSILN, DLQHLSLGSCVMIEDYDVTASMI, KLRTLDLWRCKNITESGIAELA, CPLLEELDLGWCPTLQSSTGC, LPNLQKLFLTANRSVCDTDIEELASNC, TRLRQLDILGTRMVSPASLRKLLES, and CKDLSLLDVSFCSQIDNRAVLELSAS.

Part of a SCF (SKP1-CUL1-F-box) protein ligase complex. Interacts with FAF2 and VCP. Interacts with PPTC7; this interaction promotes destruction of BNIP3 and NIX and mitophagy suppression.

The protein resides in the cytoplasm. The protein localises to the nucleus. It localises to the mitochondrion outer membrane. In terms of biological role, substrate-recognition component of the mitochondria-localized SCF-FBXL4 ubiquitin E3 ligase complex that plays a role in the restriction of mitophagy by controlling the degradation of BNIP3 and NIX mitophagy receptors. Also rescues mitochondrial injury through reverting hyperactivation of DRP1-mediated mitochondrial fission. The sequence is that of F-box/LRR-repeat protein 4 (FBXL4) from Bos taurus (Bovine).